Here is a 1200-residue protein sequence, read N- to C-terminus: Metabotropic glycine receptor (1200 aa).

The N-terminal stretch at 1 to 24 (MGAMAYSLLFCLLLAHLGLGEVGA) is a signal peptide. Positions 25 to 62 (SLDPPGRPDSPRERTPRGKQHGQQLPRASAPDPSIPWS) are disordered. The Extracellular portion of the chain corresponds to 25–417 (SLDPPGRPDS…CFVQEDKYLR (393 aa)). Positions 85 to 281 (YLYTGDFHQL…CENGSYKPGW (197 aa)) are cache-like region. N-linked (GlcNAc...) asparagine glycosylation is found at Asn98 and Asn143. A disulfide bridge links Cys99 with Cys272. Residues Ser172 and Arg173 each coordinate glycine. A glycan (N-linked (GlcNAc...) asparagine) is linked at Asn215. Positions 234 to 253 (LHRRGSNQGPRGLGHSWRRR) are disordered. Glu271 contributes to the glycine binding site. A glycan (N-linked (GlcNAc...) asparagine) is linked at Asn274. A glycine-binding site is contributed by Asp307. Asn333 is a glycosylation site (N-linked (GlcNAc...) asparagine). The chain crosses the membrane as a helical span at residues 418–439 (LAIISFQALCMLLDFVSMLVVY). Residues 440–451 (HFRKAKSIRASG) lie on the Cytoplasmic side of the membrane. A helical membrane pass occupies residues 452-474 (LILLETILFGSLLLYFPVVILYF). Residues 475–478 (EPST) lie on the Extracellular side of the membrane. The helical transmembrane segment at 479 to 501 (FRCILLRWARLLGFATVYGTVTL) threads the bilayer. Cys481 and Cys573 form a disulfide bridge. Residues 502–525 (KLHRVLKVFLSRTAQRIPYMTGGR) lie on the Cytoplasmic side of the membrane. Residues 526–547 (VMRMLAVIVLVVFWFLVGWTSS) form a helical membrane-spanning segment. At 548 to 576 (MCQNLERDILLVGQGQTSDHLTFNMCLID) the chain is on the extracellular side. Residues 577–597 (RWDYMTAVAEFLFLLWGIYLC) form a helical membrane-spanning segment. Topologically, residues 598–611 (YAVRTVPSAFHEPR) are cytoplasmic. Residues 612–633 (YMAVAVHNELIITAIFHTIRFV) traverse the membrane as a helical segment. Over 634–642 (LASRLQPDW) the chain is Extracellular. The helical transmembrane segment at 643–664 (MLMLYFAHAHLTVTVTIGLLLI) threads the bilayer. Residues 665-1200 (PKFSHSSNNP…SANKIPGPQK (536 aa)) are Cytoplasmic-facing. Phosphoserine occurs at positions 694, 705, and 708. The disordered stretch occupies residues 757–875 (RITEIPETVS…EAESTESVPL (119 aa)). 2 stretches are compositionally biased toward basic and acidic residues: residues 769–781 (CSKE…DHSA) and 819–828 (STYDHVRDQT). A Glycyl lysine isopeptide (Lys-Gly) (interchain with G-Cter in ubiquitin) cross-link involves residue Lys774. The span at 845 to 856 (ENSTLESLSSKK) shows a compositional bias: low complexity. Phosphoserine is present on residues Ser865 and Ser944. The disordered stretch occupies residues 947-988 (DNVETIPNSGHMEEPRKPQKSGIMKQQRVSLPTANPDVSSGI). The span at 973-988 (QRVSLPTANPDVSSGI) shows a compositional bias: polar residues. Positions 1000-1004 (VCPWE) match the VCPWE motif 1 motif. A Phosphoserine modification is found at Ser1059. The VCPWE motif 2 signature appears at 1065–1069 (VCPWE). A Phosphoserine modification is found at Ser1074. Residues 1130-1160 (QMGDQEKQTSSSVDIIPGSCNSSNNSHQPLT) form a disordered region. Positions 1165 to 1169 (VCPWE) match the VCPWE motif 3 motif. Positions 1177–1200 (NAERSVTLPASSALSANKIPGPQK) are disordered. The segment covering 1178 to 1191 (AERSVTLPASSALS) has biased composition (polar residues).

Belongs to the G-protein coupled receptor 3 family. Homodimer. Associates with the RGS7-GNB5 complex, promoting its localization to the cell membrane and regulating its GTPase activator activity. Interacts (via VCPWE motifs) with GNAO1. Interacts with GPC4. Interacts with EGFLAM. As to expression, highly expressed in brain. Expressed in several brain regions including the cerebral cortex, hippocampus, cerebellum and caudate putamen. Only expressed in neurons, and not in microglia, oligodendrocytes or astrocytes. Expressed in the visual center of the cerebral cortex. Also expressed in the eye, including photoreceptors, ganglion cells and trabecular meshwork.

It localises to the cell membrane. The protein localises to the postsynaptic cell membrane. It is found in the presynaptic cell membrane. Its subcellular location is the nucleus. Metabotropic receptor for glycine that controls synapse formation and function in the brain. Acts as an atypical G-protein coupled receptor that recruits and regulates the RGS7-GNB5 complex instead of activating G proteins. In absence of glycine ligand, promotes the GTPase activator activity of RGS7, increasing the GTPase activity of G protein alpha subunits, thereby driving them into their inactive GDP-bound form. Glycine-binding changes the conformation of the intracellular surface, inhibiting the GTPase activator activity of the RGS7-GNB5 complex, promoting G protein alpha subunits into their active GTP-bound form and regulating cAMP levels. Also able to bind taurine, a compound closely related to glycine, but with a two-fold lower affinity. Glycine receptor-dependent regulation of cAMP controls key ion channels, kinases and neurotrophic factors involved in neuronal excitability and synaptic transmission. Plays a pivotal role in regulating mood and cognition via its ability to regulate neuronal excitability in L2/L3 pyramidal neurons of the prefrontal cortex. Also involved in spatial learning by regulating hippocampal CA1 neuronal excitability. Acts as a synaptic organizer in the hippocampus, required for proper mossy fiber-CA3 neurocircuitry establishment, structure and function: induces presynaptic differentiation in contacting axons via its interaction with GPC4. In addition to glycine, may also act as a receptor for osteocalcin (Bglap or Bglap2) hormone: osteocalcin-binding initiates a signaling response that prevents neuronal apoptosis in the hippocampus and regulates the synthesis of neurotransmitters. The sequence is that of Metabotropic glycine receptor from Mus musculus (Mouse).